Reading from the N-terminus, the 83-residue chain is SGHHEHSTDZPSZSSKPCCBHCACTKSIPPQCRCTDLRLDSCHSACKSCICTLSIPAQCVCBBIBDFCYEPCKSSHSDDDNNN.

Disulfide bonds link Cys18–Cys72, Cys19–Cys34, Cys22–Cys68, Cys24–Cys32, Cys42–Cys49, Cys46–Cys61, and Cys51–Cys59.

It belongs to the Bowman-Birk serine protease inhibitor family.

The chain is Bowman-Birk type proteinase inhibitor from Phaseolus lunatus (Lima bean).